The chain runs to 224 residues: uncharacterized protein (224 aa).

Residue D52 is part of the active site.

This sequence belongs to the pseudouridine synthase RluA family.

It carries out the reaction a uridine in RNA = a pseudouridine in RNA. This is an uncharacterized protein from Haemophilus influenzae (strain ATCC 51907 / DSM 11121 / KW20 / Rd).